The chain runs to 71 residues: Guanine nucleotide-binding protein G(I)/G(S)/G(O) subunit gamma-2 (71 aa).

Ala2 carries the post-translational modification N-acetylalanine. Cys68 carries the post-translational modification Cysteine methyl ester. Cys68 is lipidated: S-geranylgeranyl cysteine. The propeptide at 69-71 (AIL) is removed in mature form.

Belongs to the G protein gamma family. G proteins are composed of 3 units, alpha, beta and gamma. In this context, interacts with GNB2. The heterodimer formed by GNB1 and GNG2 interacts with ARHGEF5. The heterodimer formed by GNB1 and GNG2 interacts with GRK2. Component of the TAS2R14-GNAI1 complex, consisting of TAS2R14, GNAI1, GNB1 and GNG2. Forms complexes with TAS2R14 and G-proteins; these complexes play a role in the perception of bitterness. Component of the TAS2R14-GNAT3 complex, consisting of TAS2R14, GNAT3, GNB1 and GNG2. Component of the TAS2R14-GNAS2 complex, consisting of TAS2R14, GNAS2, GNB1 and GNG2. Adrenal gland and brain.

It localises to the cell membrane. In terms of biological role, guanine nucleotide-binding proteins (G proteins) are involved as a modulator or transducer in various transmembrane signaling systems. The beta and gamma chains are required for the GTPase activity, for replacement of GDP by GTP, and for G protein-effector interaction. The chain is Guanine nucleotide-binding protein G(I)/G(S)/G(O) subunit gamma-2 (GNG2) from Bos taurus (Bovine).